Consider the following 308-residue polypeptide: RNA pseudouridylate synthase domain-containing protein 1 (308 aa).

M1 bears the N-acetylmethionine mark. Residue D67 is part of the active site. The segment at 257–292 (APDPDPSEGGPGPCSPCTPLPGPGRPPPPPETEVQR) is disordered. Over residues 269–287 (PCSPCTPLPGPGRPPPPPE) the composition is skewed to pro residues.

This sequence belongs to the pseudouridine synthase RluA family.

In Bos taurus (Bovine), this protein is RNA pseudouridylate synthase domain-containing protein 1 (RPUSD1).